The sequence spans 1434 residues: MYSSSNTFLGGANSARPGQPLMQQSPYSQQFASGQQQQPPQQGGFAPQPTGYGPQMSSFGASQLQPQATGFPAGQLQPQFTGFPGAVPQSQQTGFQPPVQQAQITGYPAQSQPPQFQVPASTGLPVRQAPRTSSEIADSFQDVAGMAPPPPPKASASKIPNIRLSFITAQDQAKFEQLFKSAVGDNQTMSGDKAKELLLRSKLPGNDLSKIWVLSDSTKSGQLFFPEFALAMYLCNLRITGRELPSALPEKIRNEVSSMVDIISFQVPDTQPEPAVRTNVPNFDAPLLENKSAPPAPQQPQPQQPSNAQLLTQLTAQPTGFPQPTGFQQSQSPFPGQNSALAPQATGFPGQPQQLQPQPTGFMTNPQPTGYNGPRPPMPPMPTGFGSNLSPAQTGGVSALAAQPTGIPGQWGFVNAPATGLPNIEALKQQLMPQPGREGGFSAVGLSGNAHIPWAITKEEKKIYDDLFRAWDGFRKGFIGGDTAIEIMGQSGLDRSDLERIWTLADPNNRGRLNMDEFAVAMHLIYRKLNGYPVPNRLPPELVPPSTRNLNDSIGTIKSMLSQDAEMSPGGGRKDATLFKNNDEAAAGYRSSARRRVGNNGRTPSPAASQASEEELSVDQLKKKIREAQIMLDAVDFQDENQAEEDDALDRRDRREAESLMDRIRRVQDDIDTHPDASFRNLDTGAERRSLRRQLQAYEDQVPQVASEVRRVEREIAEVRLELFRLKDAKEHPNSASSIVGTGPGGTVTEADRIKARARARMQARAAELAGRPVPASQDDDGAATRRLEAENATVKAERERNETMTRDVEESVREFARSLEDSLKDGGESSTREHERRRWEDALGVEDVVRDFIYDLKRSSRTAHVRKEEQQRAADTQSQRSRYNESPLGGAAGSQHSPTPTGSVVSAGSTHEDRVAAARERAQKRIAERMAAAGLKPHSDAGETLLQRQEREKKEREERLRRAEEEDAKREQERQRRLAEEQGGPTAQSAKPASKKPPPAPPSRKGRTDSAGQAEAKKAREEAAKVEQSTREQAIREEQQAQEEETARLEAAAREREAEFLKEKEAQEARLAALQEQVRQGKIKKQEEKRRKEEAARAAKEQEARLATQRAELEMAKERERQLQLELEGLDESSSDEEGPINITPQDSTPTQSQVLPAVDTAVPPPAPAPAPELDVVTSPAESASSHAAPTSISPEAESKNPYFKRISQSDSQVPPPPPAPQPAAPKAESQSTNPFHRLAQQQESSKPAFTAPGPLERKSRVRPEVDDDWSAAGSDFDDSSDDDDERPGGGSAKQLASILFGTMAPPRPLSAMDDKTPSKSSTPVQDSPATPTPPTEAAESPAAVPPPPPPPPAPAPAVPSPSAAAPPPPPPAPSMAPPVPPPGVPPPPAPPAAPTGGAGRGALLASIQAGTGLRKVQTNDRSTSSSAGRVLD.

Positions 1–133 (MYSSSNTFLG…LPVRQAPRTS (133 aa)) are disordered. The span at 28-49 (SQQFASGQQQQPPQQGGFAPQP) shows a compositional bias: low complexity. 2 stretches are compositionally biased toward polar residues: residues 55 to 68 (QMSSFGASQLQPQA) and 88 to 120 (PQSQQTGFQPPVQQAQITGYPAQSQPPQFQVPA). One can recognise an EH 1 domain in the interval 171–259 (DQAKFEQLFK…EKIRNEVSSM (89 aa)). The EF-hand 1 domain occupies 203-238 (LPGNDLSKIWVLSDSTKSGQLFFPEFALAMYLCNLR). The disordered stretch occupies residues 271-380 (QPEPAVRTNV…YNGPRPPMPP (110 aa)). The span at 294 to 303 (PPAPQQPQPQ) shows a compositional bias: pro residues. Residues 306–341 (SNAQLLTQLTAQPTGFPQPTGFQQSQSPFPGQNSAL) are compositionally biased toward polar residues. Over residues 349–359 (PGQPQQLQPQP) the composition is skewed to low complexity. Polar residues predominate over residues 361–370 (GFMTNPQPTG). Residues 460–549 (EKKIYDDLFR…PELVPPSTRN (90 aa)) enclose the EH 2 domain. The 36-residue stretch at 493–528 (LDRSDLERIWTLADPNNRGRLNMDEFAVAMHLIYRK) folds into the EF-hand 2 domain. 4 disordered regions span residues 587 to 615 (AGYRSSARRRVGNNGRTPSPAASQASEEE), 768 to 814 (ELAG…ESVR), 862 to 1063 (RTAH…EFLK), and 1078 to 1434 (QVRQ…RVLD). The segment covering 600–611 (NGRTPSPAASQA) has biased composition (polar residues). A coiled-coil region spans residues 607-815 (AASQASEEEL…TRDVEESVRE (209 aa)). Positions 783–814 (AATRRLEAENATVKAERERNETMTRDVEESVR) are enriched in basic and acidic residues. Over residues 895–910 (SQHSPTPTGSVVSAGS) the composition is skewed to polar residues. 5 stretches are compositionally biased toward basic and acidic residues: residues 911 to 929 (THEDRVAAARERAQKRIAE), 949 to 981 (RQEREKKEREERLRRAEEEDAKREQERQRRLAE), 1016 to 1063 (EAKK…EFLK), 1085 to 1105 (KKQEEKRRKEEAARAAKEQEA), and 1112 to 1124 (AELEMAKERERQL). Residues 941–1137 (DAGETLLQRQ…LEGLDESSSD (197 aa)) adopt a coiled-coil conformation. Residues 1129 to 1140 (EGLDESSSDEEG) are compositionally biased toward acidic residues. Over residues 1144–1155 (ITPQDSTPTQSQ) the composition is skewed to polar residues. Low complexity predominate over residues 1173–1193 (PELDVVTSPAESASSHAAPTS). Pro residues predominate over residues 1215-1225 (VPPPPPAPQPA). Residues 1257-1266 (LERKSRVRPE) are compositionally biased toward basic and acidic residues. The segment covering 1267 to 1287 (VDDDWSAAGSDFDDSSDDDDE) has biased composition (acidic residues). Positions 1320–1329 (SKSSTPVQDS) are enriched in polar residues. Over residues 1345 to 1395 (AVPPPPPPPPAPAPAVPSPSAAAPPPPPPAPSMAPPVPPPGVPPPPAPPAA) the composition is skewed to pro residues. Residues 1401–1418 (GRGALLASIQAGTGLRKV) enclose the WH2 domain. Residues 1421-1434 (NDRSTSSSAGRVLD) show a composition bias toward polar residues.

The protein belongs to the PAN1 family. Component of the PAN1 actin cytoskeleton-regulatory complex.

Its subcellular location is the cell membrane. It localises to the endosome membrane. It is found in the cytoplasm. The protein localises to the cytoskeleton. The protein resides in the actin patch. Its function is as follows. Component of the PAN1 actin cytoskeleton-regulatory complex required for the internalization of endosomes during actin-coupled endocytosis. The complex links the site of endocytosis to the cell membrane-associated actin cytoskeleton. Mediates uptake of external molecules and vacuolar degradation of plasma membrane proteins. Plays a role in the proper organization of the cell membrane-associated actin cytoskeleton and promotes its destabilization. The chain is Actin cytoskeleton-regulatory complex protein pan1 (pan1) from Aspergillus niger (strain ATCC MYA-4892 / CBS 513.88 / FGSC A1513).